We begin with the raw amino-acid sequence, 2260 residues long: Reducing polyketide synthase pksF (2260 aa).

The region spanning 20-445 (VEPIAIVGFG…GTNAHVVLDD (426 aa)) is the Ketosynthase family 3 (KS3) domain. Catalysis depends on for beta-ketoacyl synthase activity residues cysteine 194, histidine 329, and histidine 368. The interval 598-933 (FVFTGQGAQW…ECAGKLHTIG (336 aa)) is malonyl-CoA:ACP transacylase (MAT) domain. Serine 689 (for malonyltransferase activity) is an active-site residue. Residues 984–1121 (HELLGSRTPD…GYVAIEYDDR (138 aa)) are N-terminal hotdog fold. A dehydratase (DH) domain region spans residues 984 to 1281 (HELLGSRTPD…FRNKLFSITA (298 aa)). In terms of domain architecture, PKS/mFAS DH spans 984-1306 (HELLGSRTPD…TSTIGRNSPS (323 aa)). Histidine 1016 (proton acceptor; for dehydratase activity) is an active-site residue. The segment at 1150-1306 (RIAIDSADIY…TSTIGRNSPS (157 aa)) is C-terminal hotdog fold. Aspartate 1216 serves as the catalytic Proton donor; for dehydratase activity. The segment at 1544 to 1859 (GILKTLHYEQ…DVDVVEKIVI (316 aa)) is enoylreductase (ER) domain. Residues 1882–2104 (PDASYLIAGA…LRFCCDPDRV (223 aa)) are ketoreductase (KR) domain. The Carrier domain occupies 2174-2251 (QATDIVVEAI…LLAVKVAGKS (78 aa)). Residue serine 2211 is modified to O-(pantetheine 4'-phosphoryl)serine.

Pantetheine 4'-phosphate serves as cofactor.

In terms of biological role, reducing polyketide synthase that catalyzes the formation of a C22 intermediate attached to the ACP. Release by intramolecular hydrolysis by the enolized delta-carbonyl would give the pyrone product aslanipyrone. Alternatively, KR-mediated reduction of the beta-carbonyl of the C22 intermediate would form a beta-hydroxy thioester intermediate, which could be a substrate for a further KS-mediated condensation of an additional C2 unit to form a C24 intermediate, which cyclizes by aldol condensation followed by decarboxylation to form aslaniol. Neither aslanipyrone, aslaniol, nor their derivatives have been detected in A.solani, probably due to a low abundance and/or extensive post-PKS modification. It is assumed that the branching point from C22 to C24 is the result of KR activity on the C22 intermediate anchored to the ACP. The protein is Reducing polyketide synthase pksF of Alternaria solani.